Here is a 113-residue protein sequence, read N- to C-terminus: Large ribosomal subunit protein bL19 (113 aa).

Belongs to the bacterial ribosomal protein bL19 family.

This protein is located at the 30S-50S ribosomal subunit interface and may play a role in the structure and function of the aminoacyl-tRNA binding site. This chain is Large ribosomal subunit protein bL19, found in Nocardia farcinica (strain IFM 10152).